Here is a 513-residue protein sequence, read N- to C-terminus: Zinc finger CCCH-type with G patch domain-containing protein (513 aa).

Met-1 carries the N-acetylmethionine modification. The tract at residues 92–131 is disordered; the sequence is PVAPGAELETVPSRETGPGPTEPGQEEDDGEDEEGGAALS. Residues 115–126 show a composition bias toward acidic residues; sequence GQEEDDGEDEEG. The segment at 176–202 adopts a C3H1-type zinc-finger fold; that stretch reads KSLKPCPFFLEGKCRFQENCRFSHGQV. The interval 267–298 is disordered; the sequence is LPPLRTDPAGSSDSDGSDADDPSYARVVEPGA. A phosphoserine mark is found at Ser-278 and Ser-355. Residues 315–361 enclose the G-patch domain; the sequence is TRGIGSRLLAKMGYEFGKGLGRRADGRVEPVHAVVLPRGKSLDQCAE. Disordered stretches follow at residues 367 to 394 and 493 to 513; these read TRAGQAGVSKPPKCRSRGSGPGGRPPPR and QEAGLQREQRKADTHKKMTEF. Positions 497–513 are enriched in basic and acidic residues; sequence LQREQRKADTHKKMTEF.

As to quaternary structure, interacts with CHD4/Mi-2; the interaction is direct.

Its subcellular location is the nucleus. In terms of biological role, transcription repressor that specifically binds the 5'-GGAG[GA]A[GA]A-3' consensus sequence. Represses transcription by recruiting the chromatin multiprotein complex NuRD to target promoters. Negatively regulates expression of EGFR, a gene involved in cell proliferation, survival and migration. Its ability to repress genes of the EGFR pathway suggest it may act as a tumor suppressor. The sequence is that of Zinc finger CCCH-type with G patch domain-containing protein (ZGPAT) from Ovis aries (Sheep).